Consider the following 302-residue polypeptide: Mitochondrial glycine transporter (302 aa).

3 Solcar repeats span residues 22–112 (HPVF…LKHH), 119–203 (PKPL…AKKL), and 213–297 (FSPV…MMEK). 6 consecutive transmembrane segments (helical) span residues 28-53 (FVCGSLSGTCSTLLFQPLDLVKTRIQ), 87-113 (GVSPSFLRCIPGVGLYFSTLYTLKHHF), 125-150 (VMLGAGSRTVAAVCMLPFTVVKTRYE), 178-201 (GLTATLMRDAPFSGIYLMFYTRAK), 217-243 (LNFSCGIVAGILASVATQPADVIKTHM), and 272-290 (GGVPRALRRTLMAAMAWTV).

It belongs to the mitochondrial carrier (TC 2.A.29) family. SLC25A38 subfamily.

The protein localises to the mitochondrion inner membrane. It catalyses the reaction glycine(in) = glycine(out). Its function is as follows. Mitochondrial glycine transporter that imports glycine into the mitochondrial matrix. Plays an important role in providing glycine for the first enzymatic step in heme biosynthesis, the condensation of glycine with succinyl-CoA to produce 5-aminolevulinate (ALA) in the mitochondrial matrix. Required during erythropoiesis. Functionally, may play a role as pro-apoptotic protein that induces caspase-dependent apoptosis. This chain is Mitochondrial glycine transporter, found in Xenopus laevis (African clawed frog).